Reading from the N-terminus, the 251-residue chain is Metallo-beta-lactamase domain-containing protein 1 (251 aa).

Residues His118, His120, Asp122, His123, His173, Asp196, and His235 each contribute to the Zn(2+) site.

Belongs to the metallo-beta-lactamase superfamily. Glyoxalase II family. In terms of assembly, homodimer. Zn(2+) serves as cofactor.

The protein localises to the cytoplasm. It is found in the cytosol. It localises to the nucleus. It catalyses the reaction a ribonucleotidyl-ribonucleotide-RNA + H2O = a 3'-end ribonucleotide-RNA + a 5'-end 5'-phospho-ribonucleoside-RNA + H(+). Its function is as follows. Endoribonuclease that catalyzes the hydrolysis of histone-coding pre-mRNA 3'-end. Involved in histone pre-mRNA processing during the S-phase of the cell cycle, which is required for entering/progressing through S-phase. Cleaves histone pre-mRNA at a major and a minor cleavage site after the 5'-ACCCA-3' and the 5'-ACCCACA-3' sequence, respectively, and located downstream of the stem-loop. May require the presence of the HDE element located at the histone pre-RNA 3'-end to avoid non-specific cleavage. In Rattus norvegicus (Rat), this protein is Metallo-beta-lactamase domain-containing protein 1 (Mblac1).